Reading from the N-terminus, the 242-residue chain is Small ribosomal subunit protein uS2 (242 aa).

Belongs to the universal ribosomal protein uS2 family.

The polypeptide is Small ribosomal subunit protein uS2 (Shewanella loihica (strain ATCC BAA-1088 / PV-4)).